The chain runs to 490 residues: JNK-interacting protein 1 (490 aa).

Disordered regions lie at residues Met1–Pro71 and Glu213–Gln254. Residues Gly231–Thr249 are compositionally biased toward polar residues. The SH3 domain occupies Met271–Tyr332. The region spanning Lys344–Glu479 is the PID domain.

Belongs to the JIP scaffold family. Forms homo- and heterooligomeric complexes. Binds Hep, a dual specificity protein kinase in the JNK pathway, but not its downstream target bsk. The C-terminal region interacts with the kinesin light chain protein, Klc, and the C-terminal PTY motif of amyloid-beta protein precursor-like protein, Appl. Expressed in the brain, CNS, PNS and cells posterior to the morphogenetic furrow in the eye imaginal disk of late embryos.

The protein localises to the cytoplasm. Its function is as follows. The JNK-interacting protein (JIP) group of scaffold proteins selectively mediates JNK signaling by aggregating specific components of the MAPK cascade to form a functional JNK signaling module. May function as a regulator of vesicle transport, through interactions with the JNK-signaling components and motor proteins. This chain is JNK-interacting protein 1 (Aplip1), found in Drosophila melanogaster (Fruit fly).